Reading from the N-terminus, the 299-residue chain is ATP phosphoribosyltransferase (299 aa).

It belongs to the ATP phosphoribosyltransferase family. Long subfamily. It depends on Mg(2+) as a cofactor.

The protein resides in the cytoplasm. It carries out the reaction 1-(5-phospho-beta-D-ribosyl)-ATP + diphosphate = 5-phospho-alpha-D-ribose 1-diphosphate + ATP. Its pathway is amino-acid biosynthesis; L-histidine biosynthesis; L-histidine from 5-phospho-alpha-D-ribose 1-diphosphate: step 1/9. Its activity is regulated as follows. Feedback inhibited by histidine. In terms of biological role, catalyzes the condensation of ATP and 5-phosphoribose 1-diphosphate to form N'-(5'-phosphoribosyl)-ATP (PR-ATP). Has a crucial role in the pathway because the rate of histidine biosynthesis seems to be controlled primarily by regulation of HisG enzymatic activity. The chain is ATP phosphoribosyltransferase from Actinobacillus pleuropneumoniae serotype 5b (strain L20).